Reading from the N-terminus, the 184-residue chain is Ribulose bisphosphate carboxylase small subunit, chloroplastic 5 (184 aa).

The transit peptide at 1–43 (MAAAMMNKTIVVSKDGCARSSSIPKVATNKMGFASAVAMKKSR) directs the protein to the chloroplast.

This sequence belongs to the RuBisCO small chain family. Heterohexadecamer of 8 large and 8 small subunits.

The protein localises to the plastid. It is found in the chloroplast. Functionally, ruBisCO catalyzes two reactions: the carboxylation of D-ribulose 1,5-bisphosphate, the primary event in carbon dioxide fixation, as well as the oxidative fragmentation of the pentose substrate. Both reactions occur simultaneously and in competition at the same active site. Although the small subunit is not catalytic it is essential for maximal activity. The chain is Ribulose bisphosphate carboxylase small subunit, chloroplastic 5 from Acetabularia peniculus (Green alga).